The primary structure comprises 201 residues: 3-isopropylmalate dehydratase small subunit (201 aa).

Belongs to the LeuD family. LeuD type 1 subfamily. Heterodimer of LeuC and LeuD.

The enzyme catalyses (2R,3S)-3-isopropylmalate = (2S)-2-isopropylmalate. The protein operates within amino-acid biosynthesis; L-leucine biosynthesis; L-leucine from 3-methyl-2-oxobutanoate: step 2/4. Functionally, catalyzes the isomerization between 2-isopropylmalate and 3-isopropylmalate, via the formation of 2-isopropylmaleate. The sequence is that of 3-isopropylmalate dehydratase small subunit from Xanthobacter autotrophicus (strain ATCC BAA-1158 / Py2).